Here is a 355-residue protein sequence, read N- to C-terminus: 3-dehydroquinate synthase (355 aa).

NAD(+) contacts are provided by residues 66-71 (SGETTK), 100-104 (GATGD), 124-125 (TT), K136, K145, and 163-166 (FLET). Residues E178, H242, and H256 each coordinate Zn(2+).

This sequence belongs to the sugar phosphate cyclases superfamily. Dehydroquinate synthase family. Requires Co(2+) as cofactor. It depends on Zn(2+) as a cofactor. The cofactor is NAD(+).

It localises to the cytoplasm. It catalyses the reaction 7-phospho-2-dehydro-3-deoxy-D-arabino-heptonate = 3-dehydroquinate + phosphate. The protein operates within metabolic intermediate biosynthesis; chorismate biosynthesis; chorismate from D-erythrose 4-phosphate and phosphoenolpyruvate: step 2/7. Catalyzes the conversion of 3-deoxy-D-arabino-heptulosonate 7-phosphate (DAHP) to dehydroquinate (DHQ). The protein is 3-dehydroquinate synthase of Staphylococcus saprophyticus subsp. saprophyticus (strain ATCC 15305 / DSM 20229 / NCIMB 8711 / NCTC 7292 / S-41).